Consider the following 211-residue polypeptide: Thiamine-phosphate synthase (211 aa).

Residues glutamine 37–lysine 41 and asparagine 69 each bind 4-amino-2-methyl-5-(diphosphooxymethyl)pyrimidine. 2 residues coordinate Mg(2+): aspartate 70 and aspartate 89. Serine 108 lines the 4-amino-2-methyl-5-(diphosphooxymethyl)pyrimidine pocket. Residue threonine 134–threonine 136 participates in 2-[(2R,5Z)-2-carboxy-4-methylthiazol-5(2H)-ylidene]ethyl phosphate binding. Lysine 137 provides a ligand contact to 4-amino-2-methyl-5-(diphosphooxymethyl)pyrimidine. 2-[(2R,5Z)-2-carboxy-4-methylthiazol-5(2H)-ylidene]ethyl phosphate-binding positions include glycine 166 and valine 186–serine 187.

This sequence belongs to the thiamine-phosphate synthase family. Requires Mg(2+) as cofactor.

It carries out the reaction 2-[(2R,5Z)-2-carboxy-4-methylthiazol-5(2H)-ylidene]ethyl phosphate + 4-amino-2-methyl-5-(diphosphooxymethyl)pyrimidine + 2 H(+) = thiamine phosphate + CO2 + diphosphate. The enzyme catalyses 2-(2-carboxy-4-methylthiazol-5-yl)ethyl phosphate + 4-amino-2-methyl-5-(diphosphooxymethyl)pyrimidine + 2 H(+) = thiamine phosphate + CO2 + diphosphate. It catalyses the reaction 4-methyl-5-(2-phosphooxyethyl)-thiazole + 4-amino-2-methyl-5-(diphosphooxymethyl)pyrimidine + H(+) = thiamine phosphate + diphosphate. It participates in cofactor biosynthesis; thiamine diphosphate biosynthesis; thiamine phosphate from 4-amino-2-methyl-5-diphosphomethylpyrimidine and 4-methyl-5-(2-phosphoethyl)-thiazole: step 1/1. Its function is as follows. Condenses 4-methyl-5-(beta-hydroxyethyl)thiazole monophosphate (THZ-P) and 2-methyl-4-amino-5-hydroxymethyl pyrimidine pyrophosphate (HMP-PP) to form thiamine monophosphate (TMP). This Salmonella newport (strain SL254) protein is Thiamine-phosphate synthase.